The sequence spans 430 residues: Adenylosuccinate synthetase (430 aa).

GTP contacts are provided by residues 12–18 and 40–42; these read GDEGKGK and GHT. The active-site Proton acceptor is the Asp-13. Mg(2+)-binding residues include Asp-13 and Gly-40. Residues 13 to 16, 38 to 41, Thr-128, Arg-142, Gln-223, Thr-238, and Arg-302 each bind IMP; these read DEGK and NAGH. His-41 acts as the Proton donor in catalysis. 298–304 contacts substrate; the sequence is TTTGRPR. GTP is bound by residues Arg-304, 330–332, and 412–414; these read SID and SVG.

Belongs to the adenylosuccinate synthetase family. In terms of assembly, homodimer. Requires Mg(2+) as cofactor.

It localises to the cytoplasm. The catalysed reaction is IMP + L-aspartate + GTP = N(6)-(1,2-dicarboxyethyl)-AMP + GDP + phosphate + 2 H(+). It participates in purine metabolism; AMP biosynthesis via de novo pathway; AMP from IMP: step 1/2. Functionally, plays an important role in the de novo pathway of purine nucleotide biosynthesis. Catalyzes the first committed step in the biosynthesis of AMP from IMP. In Streptococcus pyogenes serotype M4 (strain MGAS10750), this protein is Adenylosuccinate synthetase.